The following is a 178-amino-acid chain: MAGYQLWSPWTPLDESFQWLRHTTPTPSSKHPFRASPCFPHTPSDLEVQLCLQEVTLVLDRPLVEPGESPKLPCHKSELRAVSNKKGVVRKPQPVRLSGVDSVFGRVITAQPPKWTGTFRVSDKSAFCKIISREHQWPTGLKEPQVQMTVTMCKQMLRSILLLYATYKKCTFALQHSK.

The sequence is that of FANCD2 opposite strand protein (Fancd2os) from Mus musculus (Mouse).